A 210-amino-acid chain; its full sequence is Ribosomal RNA large subunit methyltransferase E (210 aa).

Residues G61, W63, D81, D97, and D122 each contribute to the S-adenosyl-L-methionine site. The active-site Proton acceptor is K162. Positions 187–196 (KPEASRKRSP) are enriched in basic and acidic residues. A disordered region spans residues 187–210 (KPEASRKRSPEVYALGQGKRAHMK).

It belongs to the class I-like SAM-binding methyltransferase superfamily. RNA methyltransferase RlmE family.

It is found in the cytoplasm. The enzyme catalyses uridine(2552) in 23S rRNA + S-adenosyl-L-methionine = 2'-O-methyluridine(2552) in 23S rRNA + S-adenosyl-L-homocysteine + H(+). In terms of biological role, specifically methylates the uridine in position 2552 of 23S rRNA at the 2'-O position of the ribose in the fully assembled 50S ribosomal subunit. This chain is Ribosomal RNA large subunit methyltransferase E, found in Stenotrophomonas maltophilia (strain R551-3).